The sequence spans 174 residues: Large ribosomal subunit protein uL18 (174 aa).

It belongs to the universal ribosomal protein uL18 family. In terms of assembly, part of the 50S ribosomal subunit. Contacts the 5S and 23S rRNAs.

Functionally, this is one of the proteins that bind and probably mediate the attachment of the 5S RNA into the large ribosomal subunit, where it forms part of the central protuberance. This is Large ribosomal subunit protein uL18 from Methanocorpusculum labreanum (strain ATCC 43576 / DSM 4855 / Z).